The following is a 131-amino-acid chain: Glycine cleavage system H protein (131 aa).

Positions 24-106 constitute a Lipoyl-binding domain; sequence IATLGISAFA…HGEGWLLKVR (83 aa). N6-lipoyllysine is present on K65.

This sequence belongs to the GcvH family. As to quaternary structure, the glycine cleavage system is composed of four proteins: P, T, L and H. The cofactor is (R)-lipoate.

The glycine cleavage system catalyzes the degradation of glycine. The H protein shuttles the methylamine group of glycine from the P protein to the T protein. This is Glycine cleavage system H protein from Microcystis aeruginosa (strain NIES-843 / IAM M-2473).